Here is a 319-residue protein sequence, read N- to C-terminus: Replication factor C small subunit (319 aa).

Residue 45–52 coordinates ATP; sequence GPPGTGKT.

Belongs to the activator 1 small subunits family. RfcS subfamily. In terms of assembly, heteropentamer composed of four small subunits (RfcS) and one large subunit (RfcL). Both subunits interact with PCNA.

Its function is as follows. Part of the RFC clamp loader complex which loads the PCNA sliding clamp onto DNA. The complex possesses DNA-dependent ATPase activity which is further stimulated by PCNA. In Archaeoglobus fulgidus (strain ATCC 49558 / DSM 4304 / JCM 9628 / NBRC 100126 / VC-16), this protein is Replication factor C small subunit (rfcS).